Here is a 132-residue protein sequence, read N- to C-terminus: Small ribosomal subunit protein uS11c (132 aa).

It belongs to the universal ribosomal protein uS11 family. In terms of assembly, part of the 30S ribosomal subunit.

The protein localises to the plastid. It localises to the chloroplast. The protein is Small ribosomal subunit protein uS11c of Gnetum parvifolium (Small-leaved jointfir).